A 586-amino-acid polypeptide reads, in one-letter code: Succinate dehydrogenase flavoprotein subunit (586 aa).

FAD is bound by residues 10-15 and 33-48; these read GGGLAG and SIVPVKRSHSVCAQGG. At His-41 the chain carries Tele-8alpha-FAD histidine. Residues His-236 and Ser-250 each coordinate substrate. Arg-285 functions as the Proton acceptor in the catalytic mechanism. Residue His-352 coordinates substrate. Glu-376 is an FAD binding site. Arg-386 serves as a coordination point for substrate. 391–392 serves as a coordination point for FAD; the sequence is SL.

It belongs to the FAD-dependent oxidoreductase 2 family. FRD/SDH subfamily. As to quaternary structure, in B.subtilis succinate dehydrogenase forms part of an enzyme complex containing three subunits: a flavoprotein, an iron-sulfur protein and cytochrome b-558. Interacts with FloT. The cofactor is FAD.

The protein localises to the cell membrane. The protein resides in the membrane raft. The enzyme catalyses a quinone + succinate = fumarate + a quinol. It participates in carbohydrate metabolism; tricarboxylic acid cycle; fumarate from succinate (bacterial route): step 1/1. This is Succinate dehydrogenase flavoprotein subunit (sdhA) from Bacillus subtilis (strain 168).